We begin with the raw amino-acid sequence, 566 residues long: Membrane protein insertase YidC (566 aa).

A helical transmembrane segment spans residues 7-27 (ILIVALAIVSYVMVLKWNQDY). The interval 38–72 (ASSTTAPGLPDAPTGTSAANDDIPRAASDTTAPAE) is disordered. Transmembrane regions (helical) follow at residues 347-367 (LELTVDYGFLWFIAQPIFWLL), 373-393 (LVGNWGWSIIFLTMLIKGIFF), 443-463 (LGGCLPILVQMPVFLSLYWVL), 474-494 (FMLWITDLSIKDPFFILPIIM), and 521-541 (PIIFTFFFLWFPAGLVLYWVV).

This sequence belongs to the OXA1/ALB3/YidC family. Type 1 subfamily. In terms of assembly, interacts with the Sec translocase complex via SecD. Specifically interacts with transmembrane segments of nascent integral membrane proteins during membrane integration.

Its subcellular location is the cell inner membrane. In terms of biological role, required for the insertion and/or proper folding and/or complex formation of integral membrane proteins into the membrane. Involved in integration of membrane proteins that insert both dependently and independently of the Sec translocase complex, as well as at least some lipoproteins. Aids folding of multispanning membrane proteins. This chain is Membrane protein insertase YidC, found in Pseudomonas fluorescens (strain ATCC BAA-477 / NRRL B-23932 / Pf-5).